The primary structure comprises 506 residues: Acetaldehyde dehydrogenase 2 (506 aa).

240 to 245 (GETTTG) is a binding site for NAD(+). Catalysis depends on residues Glu262 and Cys301.

Belongs to the aldehyde dehydrogenase family.

The enzyme catalyses an aldehyde + NAD(+) + H2O = a carboxylate + NADH + 2 H(+). It functions in the pathway alcohol metabolism; ethanol degradation; acetate from ethanol: step 2/2. It participates in ketone degradation; acetoin degradation. In terms of biological role, involved in the catabolism of acetoin and ethanol. This is Acetaldehyde dehydrogenase 2 (acoD) from Cupriavidus necator (strain ATCC 17699 / DSM 428 / KCTC 22496 / NCIMB 10442 / H16 / Stanier 337) (Ralstonia eutropha).